A 445-amino-acid polypeptide reads, in one-letter code: Probable D-serine dehydratase (445 aa).

The residue at position 119 (Lys119) is an N6-(pyridoxal phosphate)lysine.

It belongs to the serine/threonine dehydratase family. DsdA subfamily. Requires pyridoxal 5'-phosphate as cofactor.

It catalyses the reaction D-serine = pyruvate + NH4(+). In Pseudomonas putida (strain GB-1), this protein is Probable D-serine dehydratase.